A 503-amino-acid polypeptide reads, in one-letter code: Splicing factor 3A subunit 3 (503 aa).

Disordered regions lie at residues 296–317 and 341–384; these read PALM…EHER and ATKE…NPKN. Residues 358-377 are compositionally biased toward acidic residues; sequence DDSDVEASESDNEDDPDADD. A phosphoserine mark is found at S360, S365, and S367. The Matrin-type zinc-finger motif lies at 408 to 439; sequence YNCEICGNFTYKGPKAFQRHFAEWRHAHGMRC.

The protein belongs to the SF3A3 family. In terms of assembly, probable component of a the U2 small nuclear ribonucleoproteins complex (U2 snRNP). Ubiquitous. In ovaries and testes, it is expressed in all germ and somatic cells. Highly expressed in spermatogonias and spermatocytes. Highly expressed in the germ cells of larval testes, while it is weakly expressed in fat body cells, in polyploid nuclei of salivary glands, and in larval brain.

The protein localises to the nucleus. Its function is as follows. Probable subunit of a splicing factor complex required for 'A' complex assembly formed by the stable binding of U2 snRNP to the branchpoint sequence (BPS) in pre-mRNA. Involved in male fertility. The chain is Splicing factor 3A subunit 3 (noi) from Drosophila melanogaster (Fruit fly).